The sequence spans 382 residues: ATP phosphoribosyltransferase regulatory subunit (382 aa).

This sequence belongs to the class-II aminoacyl-tRNA synthetase family. HisZ subfamily. As to quaternary structure, heteromultimer composed of HisG and HisZ subunits.

It is found in the cytoplasm. It functions in the pathway amino-acid biosynthesis; L-histidine biosynthesis; L-histidine from 5-phospho-alpha-D-ribose 1-diphosphate: step 1/9. Functionally, required for the first step of histidine biosynthesis. May allow the feedback regulation of ATP phosphoribosyltransferase activity by histidine. This is ATP phosphoribosyltransferase regulatory subunit from Verminephrobacter eiseniae (strain EF01-2).